Consider the following 513-residue polypeptide: Putative zinc finger CCCH domain-containing protein 51 (513 aa).

The tract at residues 155-180 is disordered; that stretch reads SMPRNSPNAGRNLVGHPHSSSKSSSK. Over residues 170 to 180 the composition is skewed to low complexity; sequence HPHSSSKSSSK. Residues 176-204 form a C3H1-type zinc finger; it reads KSSSKPCHFHFFRGYCKKGVNCQFFHGSV. The HTH OST-type domain occupies 218-299; that stretch reads SLSKLDMEIR…HGQYHVVLVE (82 aa). Residues 325–411 form the RRM domain; it reads NQIYMTFPVH…SELRMTWLKS (87 aa).

The sequence is that of Putative zinc finger CCCH domain-containing protein 51 from Oryza sativa subsp. japonica (Rice).